Here is a 532-residue protein sequence, read N- to C-terminus: MPKISSRDGGRPAQRTVNPIIVTRRGKIARLESGLTPQEAQIEDLVFLRKVLNRADIPYLLIRNHKNRPVLAINIELRAGLERALAAACATEPMYAKTIDEPGLSPVLVATDGLSQLVDPRVVRLYRRRIAPGGFRYGPAFGVELQFWVYEETVIRCPVENSLSRKVLPRNEITPTNVKLYGYKWPTLDGMFAPHASDVVFDIDMVFSWVDGSDPEFRARRMAQMSQYVVGEGDDAEARIRQIDELKYALRSVNMFAPWIRRIFIATDSTPPPWLAEHPKITIVRAEDHFSDRSALPTYNSHAVESQLHHIPGLSEHFLYSNDDMFFGRPLKASMFFSPGGVTRFIEAKTRIGLGANNPARSGFENAARVNRQLLFDRFGQVITRHLEHTAVPLRKSVLIEMEREFPEEFARTAASPFRSDTDISVTNSFYHYYALMTGRAVPQEKAKVLYVDTTSYAGLRLLPKLRKHRGYDFFCLNDGSFPEVPAAQRAERVVSFLERYFPIPAPWEKIAADVSRRDFAVPRTSAPSEGA.

Belongs to the stealth family.

This is Exopolysaccharide phosphotransferase CpsY (cpsY) from Mycobacterium bovis (strain ATCC BAA-935 / AF2122/97).